The following is a 491-amino-acid chain: Cobyric acid synthase (491 aa).

The region spanning 253-429 is the GATase cobBQ-type domain; the sequence is AHRVAVVRLP…WHGSLEGDAL (177 aa). Cys-334 (nucleophile) is an active-site residue. His-421 is a catalytic residue.

The protein belongs to the CobB/CobQ family. CobQ subfamily.

It functions in the pathway cofactor biosynthesis; adenosylcobalamin biosynthesis. Catalyzes amidations at positions B, D, E, and G on adenosylcobyrinic A,C-diamide. NH(2) groups are provided by glutamine, and one molecule of ATP is hydrogenolyzed for each amidation. The protein is Cobyric acid synthase of Mycobacterium marinum (strain ATCC BAA-535 / M).